We begin with the raw amino-acid sequence, 326 residues long: Putative HTH-type transcriptional regulatory protein MmarC5_0898 (326 aa).

Positions 128–183 (LRETREKLKISVGELAEISRVSRKTIYKYEQNEANPSAEVAIKIEEYLDVPLIKGI) constitute an HTH cro/C1-type domain. A DNA-binding region (H-T-H motif) is located at residues 139-158 (VGELAEISRVSRKTIYKYEQ).

The chain is Putative HTH-type transcriptional regulatory protein MmarC5_0898 from Methanococcus maripaludis (strain C5 / ATCC BAA-1333).